Reading from the N-terminus, the 412-residue chain is Major facilitator superfamily domain-containing protein 3 (412 aa).

The next 12 membrane-spanning stretches (helical) occupy residues 10–30 (GLYLVQGLPYGLQSGLLPVLL), 40–60 (VGLAKVLYAPWLLKLAWAPLV), 73–93 (STAGLGLVCGLLAGLPPPGAG), 94–114 (QAGLPAAVAGLLLLLNLGAAM), 138–158 (VQVVAYKLGAALAGGALLALL), 166–186 (LFLLLAATYWLAAALAWAAPA), 209–229 (VLAVPGTVWTAGFVLTYKLGE), 250–270 (LGLWNGVGAVVCSIAGSSLGG), 291–311 (LGGLACQTALVFHLDTLGASM), 321–341 (ALLSLCLQHFLGGLVTTVTFT), 361–381 (LLATLELLGKLLLGTLAGGLA), and 384–404 (LGPHPCFLLLLILSAFPVLYL).

This sequence belongs to the major facilitator superfamily.

It localises to the membrane. In Homo sapiens (Human), this protein is Major facilitator superfamily domain-containing protein 3 (MFSD3).